The primary structure comprises 207 residues: ATP synthase subunit b 2 (207 aa).

The chain crosses the membrane as a helical span at residues 53–72; that stretch reads TYASQLLWLVITFSVFYLLM.

The protein belongs to the ATPase B chain family. F-type ATPases have 2 components, F(1) - the catalytic core - and F(0) - the membrane proton channel. F(1) has five subunits: alpha(3), beta(3), gamma(1), delta(1), epsilon(1). F(0) has three main subunits: a(1), b(2) and c(10-14). The alpha and beta chains form an alternating ring which encloses part of the gamma chain. F(1) is attached to F(0) by a central stalk formed by the gamma and epsilon chains, while a peripheral stalk is formed by the delta and b chains.

Its subcellular location is the cell inner membrane. In terms of biological role, f(1)F(0) ATP synthase produces ATP from ADP in the presence of a proton or sodium gradient. F-type ATPases consist of two structural domains, F(1) containing the extramembraneous catalytic core and F(0) containing the membrane proton channel, linked together by a central stalk and a peripheral stalk. During catalysis, ATP synthesis in the catalytic domain of F(1) is coupled via a rotary mechanism of the central stalk subunits to proton translocation. Component of the F(0) channel, it forms part of the peripheral stalk, linking F(1) to F(0). The b'-subunit is a diverged and duplicated form of b found in plants and photosynthetic bacteria. The polypeptide is ATP synthase subunit b 2 (atpF2) (Rhizobium etli (strain CIAT 652)).